The primary structure comprises 460 residues: Ammonium transporter Rh type C (460 aa).

At 1–9 the chain is on the cytoplasmic side; that stretch reads MVWNTNLRW. The helical transmembrane segment at 10–30 threads the bilayer; sequence RLPVTCLLLQVALVVLFGVFV. Residues 31 to 61 lie on the Extracellular side of the membrane; it reads RYDMDADPHWIDKKEAENSTSDMENEFYYRY. A glycan (N-linked (GlcNAc...) asparagine) is linked at asparagine 48. A helical membrane pass occupies residues 62–82; it reads PSFQDVHVMIFVGFGFLMTFL. At 83–90 the chain is on the cytoplasmic side; the sequence is QRYGYSSV. Residues 91–111 form a helical membrane-spanning segment; it reads GFNFLLAAFGIQWALLLQGWF. The Extracellular portion of the chain corresponds to 112–125; that stretch reads HSYYRGYIRVGVEN. Residues 126-145 form a helical membrane-spanning segment; the sequence is LINADFCVGSVCVAFGAVLG. At 146–151 the chain is on the cytoplasmic side; sequence KVSPVQ. Residues 152–174 form a helical membrane-spanning segment; sequence LLIMTLFQVTLFSVNEFILLNLL. At 175–179 the chain is on the extracellular side; the sequence is EVKDA. A helical membrane pass occupies residues 180 to 200; it reads GGSMTIHTFGAYFGLTVTWIL. Residues 201–219 are Cytoplasmic-facing; the sequence is YRPGLHQSKERQSSVYHSD. Residues 220-240 traverse the membrane as a helical segment; it reads LFAMIGTLFLWMYWPSFNSAV. At 241-251 the chain is on the extracellular side; the sequence is SNHGDAQHRAA. A helical membrane pass occupies residues 252 to 272; the sequence is INTYCSLAACVLTSVALSSAL. The Cytoplasmic portion of the chain corresponds to 273-285; sequence HKKGKLDMVHIQN. The chain crosses the membrane as a helical span at residues 286–306; it reads ATLAGGVAVGTAAEMMLMPYG. Residue serine 307 is a topological domain, extracellular. Residues 308–328 traverse the membrane as a helical segment; that stretch reads LIVGFICGIVSTLGFVYLTPF. Residues 329-339 are Cytoplasmic-facing; sequence LESRLRVQDTC. The helical transmembrane segment at 340 to 360 threads the bilayer; that stretch reads GIHNLHGIPGIIGAIVGAVTA. The Extracellular segment spans residues 361–396; that stretch reads SCANTDVYGVNGLTQAFGFDGFKTNRTPSMQGKFQA. Residues 397-417 traverse the membrane as a helical segment; it reads AGLFVSLAMALVGGIIVGIIL. The Cytoplasmic segment spans residues 418–460; sequence KLPFWGQPADENCFEDAIYWEMPEEPKSTVLHPEDSTLKPSEP.

The protein belongs to the ammonium transporter (TC 2.A.49) family. Rh subfamily. As to quaternary structure, homotrimer. N-glycosylated.

It localises to the apical cell membrane. The catalysed reaction is NH4(+)(in) = NH4(+)(out). It carries out the reaction methylamine(out) = methylamine(in). The enzyme catalyses CO2(out) = CO2(in). Functionally, ammonium transporter involved in the maintenance of acid-base homeostasis. Transports ammonium and its related derivative methylammonium across the plasma membrane of epithelial cells likely contributing to renal transepithelial ammonia transport and ammonia metabolism. Postulated to primarily mediate an electroneutral bidirectional transport of NH3 ammonia species according to a mechanism that implies interaction of an NH4(+) ion with acidic residues of the pore entry followed by dissociation of NH4(+) into NH3 and H(+). As a result NH3 transits through the central pore and is protonated on the extracellular side reforming NH4(+). May act as a CO2 channel providing for renal acid secretion. The protein is Ammonium transporter Rh type C (RHCG) of Canis lupus familiaris (Dog).